The following is a 161-amino-acid chain: Trivalent organoarsenical cleaving enzyme (161 aa).

The 118-residue stretch at 2–119 (KYAHVGLNVT…DGNEWEFFYT (118 aa)) folds into the VOC domain. Fe(2+) is bound by residues histidine 5 and histidine 62. The roxarsone (III) site is built by cysteine 96 and cysteine 97. Residue glutamate 115 coordinates Fe(2+).

The cofactor is Fe(2+).

It catalyses the reaction methylarsonous acid + AH2 + O2 = arsenite + methanol + A + H(+). It carries out the reaction roxarsone (III) + AH2 + O2 = 4-hydroxy-3-nitrocyclohexa-2,5-dien-1-one + arsenite + A + H(+). The catalysed reaction is nitarsone (III) + AH2 + O2 = 4-nitrocyclohexa-2,5-dien-1-one + arsenite + A + H(+). The enzyme catalyses 4-aminophenylarsonous acid + AH2 + O2 = 4-aminocyclohexa-2,5-dien-1-one + arsenite + A. With respect to regulation, inhibited in vitro by reagents that chemically modify histidine residues (diethylpyrocarbonate (DEPC)), aspartate or glutamate residues (1-ethyl-3-(3-(dimethylamino)propyl) carbodiimide (EDC)), or cysteine residues (N-ethylmaleimide (NEM) or iodoacetamide (IAA)). Nonheme iron-dependent dioxygenase that can break carbon-arsenic bonds, playing a role in the detoxification of environmental organoarsenical compounds. Catalyzes the oxygen-dependent demethylation of highly toxic methylarsonous acid (MAs(III)) to arsenite, which can then be exported out of the cell. Can also cleave the C-As bond in several trivalent aromatic arsenicals, including roxarsone (III), nitarsone (III) and (4-aminophenyl)arsonous acid. Organoarsenical degradation by this enzyme is proposed to have a significant impact on the arsenic biogeocycle that maintains a balance between organic and inorganic species. The protein is Trivalent organoarsenical cleaving enzyme of Bacillus sp. (strain MD1).